Consider the following 76-residue polypeptide: Endothelin-1 (76 aa).

The interval 30 to 44 (CQCASQKDKKCWNFC) is endothelin-like.

Belongs to the endothelin/sarafotoxin family.

The protein resides in the secreted. In terms of biological role, endothelins are endothelium-derived vasoconstrictor peptides. Probable ligand for G-protein coupled receptors EDNRA and EDNRB which activates PTK2B, BCAR1, BCAR3 and, GTPases RAP1 and RHOA cascade in glomerular mesangial cells. Also binds the DEAR/FBXW7-AS1 receptor. Promotes mesenteric arterial wall remodeling via activation of ROCK signaling and subsequent colocalization of NFATC3 with F-actin filaments. NFATC3 then translocates to the nucleus where it subsequently promotes the transcription of the smooth muscle hypertrophy and differentiation marker ACTA2. The chain is Endothelin-1 (EDN1) from Macaca fascicularis (Crab-eating macaque).